The chain runs to 184 residues: Large ribosomal subunit protein uL5 (184 aa).

The protein belongs to the universal ribosomal protein uL5 family. As to quaternary structure, part of the 50S ribosomal subunit; part of the 5S rRNA/L5/L18/L25 subcomplex. Contacts the 5S rRNA and the P site tRNA. Forms a bridge to the 30S subunit in the 70S ribosome.

In terms of biological role, this is one of the proteins that bind and probably mediate the attachment of the 5S RNA into the large ribosomal subunit, where it forms part of the central protuberance. In the 70S ribosome it contacts protein S13 of the 30S subunit (bridge B1b), connecting the 2 subunits; this bridge is implicated in subunit movement. Contacts the P site tRNA; the 5S rRNA and some of its associated proteins might help stabilize positioning of ribosome-bound tRNAs. The sequence is that of Large ribosomal subunit protein uL5 from Syntrophotalea carbinolica (strain DSM 2380 / NBRC 103641 / GraBd1) (Pelobacter carbinolicus).